A 518-amino-acid chain; its full sequence is Xylose import ATP-binding protein XylG (518 aa).

ABC transporter domains are found at residues 6 to 245 (LQMN…VGRE) and 262 to 507 (FEAR…LSHS). 38–45 (GENGAGKS) lines the ATP pocket.

Belongs to the ABC transporter superfamily. Xylose importer (TC 3.A.1.2.4) family. The complex is composed of two ATP-binding proteins (XylG), two transmembrane proteins (XylH) and a solute-binding protein (XylF).

The protein resides in the cell inner membrane. The catalysed reaction is D-xylose(out) + ATP + H2O = D-xylose(in) + ADP + phosphate + H(+). Functionally, part of the ABC transporter complex XylFGH involved in xylose import. Responsible for energy coupling to the transport system. This chain is Xylose import ATP-binding protein XylG, found in Pseudomonas syringae pv. syringae (strain B728a).